We begin with the raw amino-acid sequence, 495 residues long: Neuronal acetylcholine receptor subunit alpha-3 (495 aa).

An N-terminal signal peptide occupies residues 1-21; that stretch reads MARRSRLRRLLLLLLLPVAST. Residues 22 to 240 lie on the Extracellular side of the membrane; sequence SDAEHRLFER…PLFYTINLII (219 aa). N-linked (GlcNAc...) asparagine glycosylation is found at Asn45 and Asn162. 2 cysteine pairs are disulfide-bonded: Cys149–Cys163 and Cys213–Cys214. The helical transmembrane segment at 241–256 threads the bilayer; the sequence is PCLLISFLTVLVFYLP. Topologically, residues 257–258 are cytoplasmic; the sequence is SD. A helical transmembrane segment spans residues 259-275; the sequence is CGEKVTLCISVLLSLTV. Glu261 is a binding site for Na(+). Residues 276-297 lie on the Extracellular side of the membrane; sequence FLLVITETIPSTSLVIPLIGEY. Residues 298–316 traverse the membrane as a helical segment; the sequence is LLFTMIFVTLSIVITVFVL. The Cytoplasmic segment spans residues 317 to 464; the sequence is NVHYRTPTTH…QDDWKYVAMV (148 aa). A phosphoserine mark is found at Ser403 and Ser406. A helical transmembrane segment spans residues 465-483; sequence IDRIFLWVFILVCILGTAG. The Extracellular segment spans residues 484-495; that stretch reads LFLQPLMTRDDA.

It belongs to the ligand-gated ion channel (TC 1.A.9) family. Acetylcholine receptor (TC 1.A.9.1) subfamily. Alpha-3/CHRNA3 sub-subfamily. In terms of assembly, neuronal AChR is composed of two different types of subunits: alpha and beta. CHRNA3/Alpha-3 subunit can be combined to CHRNB2/beta-2 or CHRNB4/beta-4 to give rise to functional receptors. Part of a complex composed of STUB1/CHIP, VCP/p97, CHRNA3, and UBXN2A that modulates the ubiquitination and endoplasmic reticulum-associated degradation (ERAD) of CHRNA3. Within the complex UBXN2A acts as a scaffold protein required for the interaction of CHRNA3 with VCP/p97, this interaction also inhibits CHRNA3 ubiquitination by STUB1/CHIP and subsequently ERAD. Interacts with UBXN2A (via SEP domain), the interaction is required for the interaction of CHRNA3 in the STUB1:VCP:UBXN2A complex. Interacts with RIC3; which is required for proper folding and assembly. Interacts with LYPD6. In terms of processing, ubiquitinated; by STUB1/CHIP and thereafter degraded by the 26S proteosome complex.

Its subcellular location is the synaptic cell membrane. It localises to the cell membrane. The protein localises to the endoplasmic reticulum. The protein resides in the golgi apparatus. The enzyme catalyses K(+)(in) = K(+)(out). It catalyses the reaction Na(+)(in) = Na(+)(out). It carries out the reaction Ca(2+)(in) = Ca(2+)(out). Activated by a myriad of ligands such as acetylcholine, cytisine, nicotine, choline and epibatidine. The heteropentamer CHRNA3:CHRNB2 activity is blocked by alpha-conotoxins ImI, ImII, PnIA, GID and MII. The heteropentamer CHRNA3:CHRNB4 activity is blocked by the alpha-conotoxin ImI and AuIB. Component of neuronal acetylcholine receptors (nAChRs) that function as pentameric, ligand-gated cation channels with high calcium permeability among other activities. nAChRs are excitatory neurotrasnmitter receptors formed by a collection of nAChR subunits known to mediate synaptic transmission in the nervous system and the neuromuscular junction. Each nAchR subunit confers differential attributes to channel properties, including activation, deactivation and desensitization kinetics, pH sensitivity, cation permeability, and binding to allosteric modulators. CHRNA3 forms heteropentameric neuronal acetylcholine receptors with CHRNB2 and CHRNB4. CHRNA3:CHRNB4 being predominant in neurons of the autonomic ganglia, it is known as ganglionic nicotinic receptor. CHRNA3:CHRNB4 also plays an important role in the habenulo-interpeduncular tract, modulating the mesolimbic dopamine system and affecting reward circuits and addiction. Hypothalamic CHRNA3:CHRNB4 nAChR activation by nicotine leads to activation of POMC neurons and a decrease in food intake. Also expressed in the urothelium where it modulates reflex bladder activity by increasing intracellular calcium through extracellular influx and basal ATP release. The sequence is that of Neuronal acetylcholine receptor subunit alpha-3 (CHRNA3) from Bos taurus (Bovine).